We begin with the raw amino-acid sequence, 188 residues long: F7-2 fimbrial protein (188 aa).

An N-terminal signal peptide occupies residues 1 to 21 (MIKSVIAGAVAMAVVSFGAYA). Residues Cys43 and Cys82 are joined by a disulfide bond.

Belongs to the fimbrial protein family.

It localises to the fimbrium. Its function is as follows. Fimbriae (also called pili), polar filaments radiating from the surface of the bacterium to a length of 0.5-1.5 micrometers and numbering 100-300 per cell, enable bacteria to colonize the epithelium of specific host organs. This is F7-2 fimbrial protein (F7-2) from Escherichia coli O6:H1 (strain CFT073 / ATCC 700928 / UPEC).